A 166-amino-acid polypeptide reads, in one-letter code: Large ribosomal subunit protein uL10 (166 aa).

Belongs to the universal ribosomal protein uL10 family. Part of the ribosomal stalk of the 50S ribosomal subunit. The N-terminus interacts with L11 and the large rRNA to form the base of the stalk. The C-terminus forms an elongated spine to which L12 dimers bind in a sequential fashion forming a multimeric L10(L12)X complex.

Its function is as follows. Forms part of the ribosomal stalk, playing a central role in the interaction of the ribosome with GTP-bound translation factors. The sequence is that of Large ribosomal subunit protein uL10 from Streptococcus agalactiae serotype III (strain NEM316).